The chain runs to 816 residues: MSKSDQEHTTTEPTIVAEEELRIPELLPLLPIRDVVVYPFMIIPLFVGREMSIKAVDQALAGDRMIMLATQHDIGDEDPTPDKIYNVGTVAMIMRMLKLPDGRVKILVQGLVKARIAEFVEFKPFHTVRIERLVEPVAVDNLETEALMRTVREQLAKIAELGKQISPEVMVILENITDPGSMADLIASNLGLKLSEAQMLLEIEDPVRRLTKVNDLLAREHEMLSVQAQIQNAAREEMGKNQKEYYLREQMKAIQQELGDHDGKEELEELRKAIETARMPENVEKEALKQLGRLERMHGDSGEAGVIRTYLDWLIEIPWSKTTRDSLDIIRAKKILDEDHSYLDKVKERILEFLAVRKLNKQMKGPILCFVGPPGVGKTSLGKSIARALNRKFVRISLGGVRDEAEIRGHRRTYLGALPGRIIQGMKQAGTRNPVFMLDELDKLGYDYKGDPSAALLEVLDPQQNNAFSDHYVNLPYDLSNVLFVATANHSDPIPSALFDRMEVINIPGYTEEEKLEIAIRYLVPRQMKDNGLKAKHIVFEEEALKEIIAKYTREAGLRNLEREIGNVCRKVARKIAEGHKRQIRVTPAAVATFLGAAKFLRDDEMDKNEVGVVNGLAWTSVGGEVLHIEATTMAGKGGMALTGQLGDVMKESVQAALAYIRSHGSEFHINPDWFQENEIHVHVPAGAVPKDGPSAGCAMATALISVLTKVPVKKDVAMTGEISLRGKVLPIGGLKEKILAAVRAGMKMVIIPEQNRKDLEDIPKAMQKKVKIVPVKEIDEVLKLALEKFPIPAPKGKAKPATPKVVVRPSKEISA.

A Lon N-terminal domain is found at 27–221; sequence LPLLPIRDVV…KVNDLLAREH (195 aa). Residue 372–379 participates in ATP binding; it reads GPPGVGKT. The 182-residue stretch at 608-789 folds into the Lon proteolytic domain; that stretch reads KNEVGVVNGL…DEVLKLALEK (182 aa). Residues Ser695 and Lys738 contribute to the active site. Positions 795-816 are disordered; that stretch reads PKGKAKPATPKVVVRPSKEISA. A compositionally biased stretch (low complexity) spans 800 to 809; it reads KPATPKVVVR.

This sequence belongs to the peptidase S16 family. As to quaternary structure, homohexamer. Organized in a ring with a central cavity.

The protein localises to the cytoplasm. The catalysed reaction is Hydrolysis of proteins in presence of ATP.. ATP-dependent serine protease that mediates the selective degradation of mutant and abnormal proteins as well as certain short-lived regulatory proteins. Required for cellular homeostasis and for survival from DNA damage and developmental changes induced by stress. Degrades polypeptides processively to yield small peptide fragments that are 5 to 10 amino acids long. Binds to DNA in a double-stranded, site-specific manner. In Trichlorobacter lovleyi (strain ATCC BAA-1151 / DSM 17278 / SZ) (Geobacter lovleyi), this protein is Lon protease.